The chain runs to 371 residues: 4-hydroxy-3-methylbut-2-en-1-yl diphosphate synthase (flavodoxin) (371 aa).

4 residues coordinate [4Fe-4S] cluster: cysteine 269, cysteine 272, cysteine 304, and glutamate 311.

Belongs to the IspG family. The cofactor is [4Fe-4S] cluster.

It carries out the reaction (2E)-4-hydroxy-3-methylbut-2-enyl diphosphate + oxidized [flavodoxin] + H2O + 2 H(+) = 2-C-methyl-D-erythritol 2,4-cyclic diphosphate + reduced [flavodoxin]. Its pathway is isoprenoid biosynthesis; isopentenyl diphosphate biosynthesis via DXP pathway; isopentenyl diphosphate from 1-deoxy-D-xylulose 5-phosphate: step 5/6. Converts 2C-methyl-D-erythritol 2,4-cyclodiphosphate (ME-2,4cPP) into 1-hydroxy-2-methyl-2-(E)-butenyl 4-diphosphate. In Acinetobacter baylyi (strain ATCC 33305 / BD413 / ADP1), this protein is 4-hydroxy-3-methylbut-2-en-1-yl diphosphate synthase (flavodoxin).